The chain runs to 380 residues: Guanine nucleotide-binding protein subunit beta (380 aa).

WD repeat units lie at residues 64–94 (GHSG…IVWN), 106–136 (LHCP…SIFN), 155–186 (GHKG…VLWD), 203–234 (GHTA…RLWD), 247–277 (GHED…RLFD), 296–326 (NELP…YVWD), and 342–372 (SHDG…KIWA).

It belongs to the WD repeat G protein beta family. G proteins are composed of 3 units, alpha, beta and gamma. Present in the root, leaf and tassel.

Functionally, guanine nucleotide-binding proteins (G proteins) are involved as a modulator or transducer in various transmembrane signaling systems. The beta and gamma chains are required for the GTPase activity, for replacement of GDP by GTP, and for G protein-effector interaction. This Zea mays (Maize) protein is Guanine nucleotide-binding protein subunit beta (GB1).